Here is a 322-residue protein sequence, read N- to C-terminus: Formimidoylglutamase (322 aa).

Mn(2+)-binding residues include His-127, Asp-163, His-165, Asp-167, Asp-254, and Asp-256.

It belongs to the arginase family. The cofactor is Mn(2+).

It carries out the reaction N-formimidoyl-L-glutamate + H2O = formamide + L-glutamate. Its pathway is amino-acid degradation; L-histidine degradation into L-glutamate; L-glutamate from N-formimidoyl-L-glutamate (hydrolase route): step 1/1. Functionally, catalyzes the conversion of N-formimidoyl-L-glutamate to L-glutamate and formamide. The protein is Formimidoylglutamase of Paraburkholderia xenovorans (strain LB400).